A 630-amino-acid polypeptide reads, in one-letter code: Sodium-dependent serotonin transporter (630 aa).

Over 1-87 (METTPLNSQK…ERETWGKKVD (87 aa)) the chain is Cytoplasmic. Residues 31-59 (VPTPGDKVESGQISNGYSAVPSPGAGDDT) are disordered. Residue Tyr-47 is modified to Phosphotyrosine. Residues 88 to 112 (FLLSVIGYAVDLGNVWRFPYICYQN) form a helical membrane-spanning segment. Residues Gly-94, Ala-96, Val-97, Asp-98, and Asn-101 each coordinate Na(+). Residue Asp-98 coordinates serotonin. Residues 113 to 115 (GGG) are Extracellular-facing. The chain crosses the membrane as a helical span at residues 116–135 (AFLIPYTIMAIFGGIPLFYM). Topologically, residues 136-160 (ELALGQYHRNGCISIWRKICPIFKG) are cytoplasmic. Tyr-142 is modified (phosphotyrosine). The chain crosses the membrane as a helical span at residues 161–186 (IGYAICIIAFYIASYYNTIMAWALYY). Over 187 to 252 (LISSFTDQLP…KGLQDLGGIS (66 aa)) the chain is Extracellular. A disulfide bond links Cys-200 and Cys-209. 2 N-linked (GlcNAc...) asparagine glycosylation sites follow: Asn-208 and Asn-217. A helical membrane pass occupies residues 253 to 271 (WQLALCIMLIFTVIYFSIW). Topologically, residues 272–277 (KGVKTS) are cytoplasmic. Thr-276 carries the post-translational modification Phosphothreonine. A helical membrane pass occupies residues 278-297 (GKVVWVTATFPYIILSVLLV). Residues 298 to 324 (RGATLPGAWRGVLFYLKPNWQKLLETG) lie on the Extracellular side of the membrane. A helical membrane pass occupies residues 325–347 (VWIDAAAQIFFSLGPGFGVLLAF). Ser-336 lines the Na(+) pocket. At 348 to 360 (ASYNKFNNNCYQD) the chain is on the cytoplasmic side. The helical transmembrane segment at 361 to 380 (ALVTSVVNCMTSFVSGFVIF) threads the bilayer. Position 368 (Asn-368) interacts with Na(+). The Extracellular portion of the chain corresponds to 381-421 (TVLGYMAEMRNEDVSEVAKDAGPSLLFITYAEAIANMPAST). The chain crosses the membrane as a helical span at residues 422–443 (FFAIIFFLMLITLGLDSTFAGL). 3 residues coordinate Na(+): Leu-434, Asp-437, and Ser-438. Thr-439 lines the serotonin pocket. Residues 444–463 (EGVITAVLDEFPHIWAKRRE) are Cytoplasmic-facing. The chain crosses the membrane as a helical span at residues 464-483 (WFVLAVVITCFFGSLVTLTF). Topologically, residues 484-494 (GGAYVVKLLEE) are extracellular. Serotonin contacts are provided by Glu-494 and Tyr-495. Residues 495–516 (YATGPAVLTVALIEAVAVSWFY) traverse the membrane as a helical segment. Residues 517–538 (GITQFCRDVKEMLGFSPGWFWR) lie on the Cytoplasmic side of the membrane. The chain crosses the membrane as a helical span at residues 539-558 (ICWVAISPLFLLFIICSFLM). Serotonin is bound by residues Phe-556 and Ser-559. The Extracellular portion of the chain corresponds to 559-574 (SPPQLRLFQYNYPHWS). Residues 575–595 (IILGYCIGTSSFVCIPTYIAY) form a helical membrane-spanning segment. Residues 596–630 (RLISTPGTFKERIIKSITPETPTEIPCGDVRLNAV) lie on the Cytoplasmic side of the membrane. Residues 616–624 (TPTEIPCGD) are interaction with RAB4A.

The protein belongs to the sodium:neurotransmitter symporter (SNF) (TC 2.A.22) family. SLC6A4 subfamily. As to quaternary structure, monomer or homooligomer. Interacts (via C-terminus) with SCAMP2; the interaction is direct and retains transporter molecules intracellularly. Interacts with filamentous actin and STX1A. Interacts (via the N-terminus) with STX1A (via the H3 domain); this interaction regulates SLC4A6 channel conductance. Interacts with SEC23A, SEC24C and PATJ. Interacts with NOS1; the interaction may diminish the cell surface localization of SERT in the brain and, correspondingly, reduce serotonin reuptake. Interacts with TGFB1I1. Interacts with ITGAV:ITGB3. Interacts (via C-terminus) with ITGB3; this interaction regulates SLC6A4 trafficking. In terms of processing, phosphorylation at Thr-276 increases 5-HT uptake and is required for cGMP-mediated SERT regulation.

It is found in the cell membrane. The protein localises to the endomembrane system. The protein resides in the endosome membrane. Its subcellular location is the synapse. It localises to the cell junction. It is found in the focal adhesion. The protein localises to the cell projection. The protein resides in the neuron projection. The enzyme catalyses serotonin(out) + K(+)(in) + Na(+)(out) + H(+)(in) = serotonin(in) + K(+)(out) + Na(+)(in) + H(+)(out). Serotonin transporter that cotransports serotonin with one Na(+) ion in exchange for one K(+) ion and possibly one proton in an overall electroneutral transport cycle. Transports serotonin across the plasma membrane from the extracellular compartment to the cytosol thus limiting serotonin intercellular signaling. Essential for serotonin homeostasis in the central nervous system. In the developing somatosensory cortex, acts in glutamatergic neurons to control serotonin uptake and its trophic functions accounting for proper spatial organization of cortical neurons and elaboration of sensory circuits. In the mature cortex, acts primarily in brainstem raphe neurons to mediate serotonin uptake from the synaptic cleft back into the pre-synaptic terminal thus terminating serotonin signaling at the synapse. Modulates mucosal serotonin levels in the gastrointestinal tract through uptake and clearance of serotonin in enterocytes. Required for enteric neurogenesis and gastrointestinal reflexes. Regulates blood serotonin levels by ensuring rapid high affinity uptake of serotonin from plasma to platelets, where it is further stored in dense granules via vesicular monoamine transporters and then released upon stimulation. Mechanistically, the transport cycle starts with an outward-open conformation having Na1(+) and Cl(-) sites occupied. The binding of a second extracellular Na2(+) ion and serotonin substrate leads to structural changes to outward-occluded to inward-occluded to inward-open, where the Na2(+) ion and serotonin are released into the cytosol. Binding of intracellular K(+) ion induces conformational transitions to inward-occluded to outward-open and completes the cycle by releasing K(+) possibly together with a proton bound to Asp-98 into the extracellular compartment. Na1(+) and Cl(-) ions remain bound throughout the transport cycle. Additionally, displays serotonin-induced channel-like conductance for monovalent cations, mainly Na(+) ions. The channel activity is uncoupled from the transport cycle and may contribute to the membrane resting potential or excitability. This is Sodium-dependent serotonin transporter (SLC6A4) from Macaca mulatta (Rhesus macaque).